A 109-amino-acid polypeptide reads, in one-letter code: Aquaporin-2 (109 aa).

At 1–6 (SIAFSR) the chain is on the cytoplasmic side. A helical transmembrane segment spans residues 7-27 (AVLSEFLATLLFVFFGLGSAL). Topologically, residues 28–35 (NWPQALPS) are extracellular. Residues 36-54 (VLQIAMAFGLAIGTLVQTL) traverse the membrane as a helical segment. Over 55-59 (GHISG) the chain is Cytoplasmic. The discontinuously helical intramembrane region spans 60-69 (AHINPAVTIA). The NPA 1 motif lies at 63–65 (NPA). The Cytoplasmic segment spans residues 70–80 (CLVGCHVSFLR). Residues 81 to 102 (ALFYLAAQLLGAVAGAALLHEL) traverse the membrane as a helical segment. At 103-109 (TPPDIRG) the chain is on the extracellular side.

The protein belongs to the MIP/aquaporin (TC 1.A.8) family. As to quaternary structure, homotetramer. In terms of processing, serine phosphorylation is necessary and sufficient for expression at the apical membrane. Endocytosis is not phosphorylation-dependent. N-glycosylated.

It localises to the apical cell membrane. Its subcellular location is the basolateral cell membrane. The protein resides in the cell membrane. The protein localises to the cytoplasmic vesicle membrane. It is found in the golgi apparatus. It localises to the trans-Golgi network membrane. It catalyses the reaction H2O(in) = H2O(out). The catalysed reaction is glycerol(in) = glycerol(out). Functionally, forms a water-specific channel that provides the plasma membranes of renal collecting duct with high permeability to water, thereby permitting water to move in the direction of an osmotic gradient. Plays an essential role in renal water homeostasis. Could also be permeable to glycerol. In Procavia capensis habessinica (Abyssinian hyrax), this protein is Aquaporin-2.